A 116-amino-acid polypeptide reads, in one-letter code: Transcription elongation factor SPT4 homolog 1 (116 aa).

A C4-type zinc finger spans residues 19 to 39 (CLRCRLVKTYDQFRDSGCENC).

Belongs to the SPT4 family.

The protein localises to the nucleus. May regulate transcription elongation by RNA polymerase II. May enhance transcriptional pausing at sites proximal to the promoter, which may in turn facilitate the assembly of an elongation competent RNA polymerase II complex. In Arabidopsis thaliana (Mouse-ear cress), this protein is Transcription elongation factor SPT4 homolog 1.